A 2273-amino-acid polypeptide reads, in one-letter code: Linear gramicidin synthase subunit A (2273 aa).

A GART region spans residues 1–144; it reads MRILFLTTFM…AIEELFIREW (144 aa). Carrier domains are found at residues 693 to 767 and 1724 to 1798; these read APTD…TEQK and APRT…TSEQ. O-(pantetheine 4'-phosphoryl)serine is present on residues S728 and S1759.

It belongs to the ATP-dependent AMP-binding enzyme family. As to quaternary structure, large multienzyme complex composed of 4 subunits; LgrA, LgrB, LgrC and LgrD. Pantetheine 4'-phosphate serves as cofactor.

Its function is as follows. Activates valine (or leucine, but much less frequently), and then glycine and catalyzes the formation of the peptide bond in the first step of peptide synthesis. This enzyme may also play a role in N-formylation of the first amino acid residue in the synthesized dipeptide. The protein is Linear gramicidin synthase subunit A (lgrA) of Brevibacillus parabrevis.